Here is a 469-residue protein sequence, read N- to C-terminus: 3-isopropylmalate dehydratase large subunit (469 aa).

Residues Cys350, Cys410, and Cys413 each coordinate [4Fe-4S] cluster.

Belongs to the aconitase/IPM isomerase family. LeuC type 1 subfamily. Heterodimer of LeuC and LeuD. The cofactor is [4Fe-4S] cluster.

The catalysed reaction is (2R,3S)-3-isopropylmalate = (2S)-2-isopropylmalate. It participates in amino-acid biosynthesis; L-leucine biosynthesis; L-leucine from 3-methyl-2-oxobutanoate: step 2/4. Its function is as follows. Catalyzes the isomerization between 2-isopropylmalate and 3-isopropylmalate, via the formation of 2-isopropylmaleate. This Agrobacterium fabrum (strain C58 / ATCC 33970) (Agrobacterium tumefaciens (strain C58)) protein is 3-isopropylmalate dehydratase large subunit.